Reading from the N-terminus, the 409-residue chain is 8-amino-7-oxononanoate synthase (409 aa).

Position 20 (R20) interacts with substrate. 116 to 117 (GY) contacts pyridoxal 5'-phosphate. Position 141 (H141) interacts with substrate. The pyridoxal 5'-phosphate site is built by S187, H215, and T243. K246 carries the post-translational modification N6-(pyridoxal phosphate)lysine. T369 contributes to the substrate binding site.

This sequence belongs to the class-II pyridoxal-phosphate-dependent aminotransferase family. BioF subfamily. In terms of assembly, homodimer. It depends on pyridoxal 5'-phosphate as a cofactor.

The enzyme catalyses 6-carboxyhexanoyl-[ACP] + L-alanine + H(+) = (8S)-8-amino-7-oxononanoate + holo-[ACP] + CO2. The protein operates within cofactor biosynthesis; biotin biosynthesis. Catalyzes the decarboxylative condensation of pimeloyl-[acyl-carrier protein] and L-alanine to produce 8-amino-7-oxononanoate (AON), [acyl-carrier protein], and carbon dioxide. The protein is 8-amino-7-oxononanoate synthase of Polaromonas naphthalenivorans (strain CJ2).